A 116-amino-acid polypeptide reads, in one-letter code: Nucleoid-associated protein P9215_00191 (116 aa).

The protein belongs to the YbaB/EbfC family. As to quaternary structure, homodimer.

Its subcellular location is the cytoplasm. The protein resides in the nucleoid. Its function is as follows. Binds to DNA and alters its conformation. May be involved in regulation of gene expression, nucleoid organization and DNA protection. The sequence is that of Nucleoid-associated protein P9215_00191 from Prochlorococcus marinus (strain MIT 9215).